We begin with the raw amino-acid sequence, 472 residues long: 2-methylcitrate synthase, mitochondrial (472 aa).

A mitochondrion-targeting transit peptide spans 1-29 (MALNLTTSRRALGSLKPLTRAAFVGARGY). 2 residues coordinate CoA: R75 and K193. H271 lines the oxaloacetate pocket. L306 contributes to the CoA binding site. The active site involves H307. CoA contacts are provided by V348, G350, and Y351. Oxaloacetate-binding residues include H353 and R362. Residue H353 is part of the active site. The CoA site is built by T402, K403, and N408. The active site involves D410. Residues R436 and R456 each coordinate oxaloacetate.

Belongs to the citrate synthase family. In terms of assembly, homodimer.

It localises to the mitochondrion matrix. It catalyses the reaction propanoyl-CoA + oxaloacetate + H2O = (2S,3S)-2-methylcitrate + CoA + H(+). The catalysed reaction is oxaloacetate + acetyl-CoA + H2O = citrate + CoA + H(+). The protein operates within organic acid metabolism; propanoate degradation. Functionally, component of the methylcitrate cycle that catalyzes the synthesis of (2S,3S)-2-methylcitrate from propionyl-CoA and oxaloacetate. Plays an important role in detoxification of propionyl-CoA, an inhibitor of both primary and secondary metabolism. Also has citrate synthase activity using as substrates acetyl-CoA and oxaloacetate. The sequence is that of 2-methylcitrate synthase, mitochondrial from Fusarium solani (Filamentous fungus).